The following is a 337-amino-acid chain: Ribosomal RNA small subunit methyltransferase C (337 aa).

It belongs to the methyltransferase superfamily. RsmC family. As to quaternary structure, monomer.

It is found in the cytoplasm. The catalysed reaction is guanosine(1207) in 16S rRNA + S-adenosyl-L-methionine = N(2)-methylguanosine(1207) in 16S rRNA + S-adenosyl-L-homocysteine + H(+). Its function is as follows. Specifically methylates the guanine in position 1207 of 16S rRNA in the 30S particle. This chain is Ribosomal RNA small subunit methyltransferase C, found in Acinetobacter baumannii (strain ATCC 17978 / DSM 105126 / CIP 53.77 / LMG 1025 / NCDC KC755 / 5377).